The sequence spans 420 residues: Gamma-glutamyl phosphate reductase (420 aa).

It belongs to the gamma-glutamyl phosphate reductase family.

Its subcellular location is the cytoplasm. The catalysed reaction is L-glutamate 5-semialdehyde + phosphate + NADP(+) = L-glutamyl 5-phosphate + NADPH + H(+). It functions in the pathway amino-acid biosynthesis; L-proline biosynthesis; L-glutamate 5-semialdehyde from L-glutamate: step 2/2. Its function is as follows. Catalyzes the NADPH-dependent reduction of L-glutamate 5-phosphate into L-glutamate 5-semialdehyde and phosphate. The product spontaneously undergoes cyclization to form 1-pyrroline-5-carboxylate. The polypeptide is Gamma-glutamyl phosphate reductase (Neisseria meningitidis serogroup B (strain ATCC BAA-335 / MC58)).